A 153-amino-acid chain; its full sequence is ORM1-like protein 1 (153 aa).

Residues 1-26 lie on the Cytoplasmic side of the membrane; sequence MNVGVAHSEVNPNTRVMNSRGMWLTY. Helical transmembrane passes span 27-46 and 47-64; these read ALGVGLLHIVLLSIPFFSVP and VAWTLTNVIHNLGMYVFL. Topologically, residues 65–100 are cytoplasmic; sequence HAVKGTPFETPDQGKARLLTHWEQLDYGVQFTSSRK. A helical membrane pass occupies residues 101–121; sequence FFTISPIILYFLASFYTKYDT. At 122–123 the chain is on the extracellular side; sequence TH. The helical transmembrane segment at 124 to 140 threads the bilayer; sequence FILNTASLLSVLIPKMP. The Cytoplasmic segment spans residues 141-153; that stretch reads QLHGVRIFGINKY.

This sequence belongs to the ORM family. In terms of assembly, ceramide-sensitive subunit of the serine palmitoyltransferase (SPT) complex, which is also composed of SPTLC1, SPTLC2/3 and SPTSSA/B.

The protein localises to the endoplasmic reticulum membrane. Functionally, plays an essential role in the homeostatic regulation of sphingolipid de novo biosynthesis by modulating the activity of the serine palmitoyltransferase (SPT) in response to ceramide levels. When complexed to SPT, the binding of ceramides to its N-terminus stabilizes a conformation that block SPT substrate entry, hence preventing SPT catalytic activity. Through this mechanism, maintains ceramide levels at sufficient concentrations for the production of complex sphingolipids, but which prevents the accumulation of ceramides to levels that trigger apoptosis. The polypeptide is ORM1-like protein 1 (ORMDL1) (Bos taurus (Bovine)).